We begin with the raw amino-acid sequence, 78 residues long: Conotoxin Bu2 (78 aa).

The N-terminal stretch at 1-19 (MKLTCVLIIAVLFLTAITA) is a signal peptide. A propeptide spanning residues 20–41 (DDSRDKQVYRAVGLIDKMRRIR) is cleaved from the precursor. Intrachain disulfides connect cysteine 46–cysteine 59, cysteine 53–cysteine 64, and cysteine 58–cysteine 73.

Belongs to the conotoxin O1 superfamily. As to expression, expressed by the venom duct.

Its subcellular location is the secreted. The polypeptide is Conotoxin Bu2 (Conus bullatus (Bubble cone)).